A 153-amino-acid chain; its full sequence is Ribosome maturation factor RimP (153 aa).

Belongs to the RimP family.

The protein localises to the cytoplasm. In terms of biological role, required for maturation of 30S ribosomal subunits. The chain is Ribosome maturation factor RimP from Coxiella burnetii (strain RSA 331 / Henzerling II).